Here is a 120-residue protein sequence, read N- to C-terminus: NAD(P)H-quinone oxidoreductase subunit 3 (120 aa).

3 helical membrane passes run 10-30 (FLGF…TNLI), 64-84 (MFAL…PWAV), and 89-109 (LGLL…IALA).

The protein belongs to the complex I subunit 3 family. As to quaternary structure, NDH-1 can be composed of about 15 different subunits; different subcomplexes with different compositions have been identified which probably have different functions.

The protein localises to the cellular thylakoid membrane. The catalysed reaction is a plastoquinone + NADH + (n+1) H(+)(in) = a plastoquinol + NAD(+) + n H(+)(out). It carries out the reaction a plastoquinone + NADPH + (n+1) H(+)(in) = a plastoquinol + NADP(+) + n H(+)(out). Its function is as follows. NDH-1 shuttles electrons from an unknown electron donor, via FMN and iron-sulfur (Fe-S) centers, to quinones in the respiratory and/or the photosynthetic chain. The immediate electron acceptor for the enzyme in this species is believed to be plastoquinone. Couples the redox reaction to proton translocation, and thus conserves the redox energy in a proton gradient. Cyanobacterial NDH-1 also plays a role in inorganic carbon-concentration. The polypeptide is NAD(P)H-quinone oxidoreductase subunit 3 (Prochlorococcus marinus subsp. pastoris (strain CCMP1986 / NIES-2087 / MED4)).